The chain runs to 157 residues: MTDFKQLLFRAGFMNFGKLDRRAAMEFLFINSERTLERWIAENKPCPRAVAMLKQRINGGMALHKDWGGFYICRGGYLWTPRGKKYDASYINKLDFLQSSVRYNESHVNALQNQIDHLHDLVAASETLKTIGNDLIKMSDSLALKEIVMKYGDKQRA.

This is an uncharacterized protein from Pseudoalteromonas espejiana (Bacteriophage PM2).